A 454-amino-acid polypeptide reads, in one-letter code: Mitochondrial dynamics protein MID49 (454 aa).

Topologically, residues 1–22 are mitochondrial intermembrane; sequence MAEFSQKRGKRRGDEGLGSMVD. A helical membrane pass occupies residues 23 to 43; it reads FLLANARLVLGVGGAAVLGIA. At 44-454 the chain is on the cytoplasmic side; it reads TLAVKRFIDR…SGLQEPEGLL (411 aa). A disordered region spans residues 76–119; that stretch reads ATPHLQPRPPPAALSQPVLPLAPSSSAPEGPAKSDPEVTPQLSS. Over residues 88-108 the composition is skewed to low complexity; that stretch reads ALSQPVLPLAPSSSAPEGPAK.

The protein belongs to the MID49/MID51 family. As to quaternary structure, interacts with DNM1L.

The protein resides in the mitochondrion outer membrane. Functionally, mitochondrial outer membrane protein which regulates mitochondrial organization. It is required for mitochondrial fission and promotes the recruitment and association of the fission mediator dynamin-related protein 1 (DNM1L) to the mitochondrial surface independently of the mitochondrial fission FIS1 and MFF proteins. Regulates DNM1L GTPase activity. The chain is Mitochondrial dynamics protein MID49 (MIEF2) from Pongo abelii (Sumatran orangutan).